The following is a 365-amino-acid chain: MPQNVILPGPAPWGFRLSGGIDFNQPLIITRITPGSKAAAANLCPGDVILAIDGYGTESMTHADAQDRIKAAAHQLCLKIDRAETRLWSPQVTEDGKAHPFKINLESEPQDVNYFEHKHNIRPKPFIIPGRSSGCSTPSGIDGGSGRSTPSSVSTLSTICPGDLKVAAKMAPNIPLEMELPGVKIVHAQFNTPMQLYSDDNIMETLQGQVSTALGETPSMSEPTTASVPPQSDVYRMLHDNRNEPTQPRQSGSFRVLQELVNDGPDDRPAGTRSVRAPVTKIHGGAGGTQKMPLCDKCGSGIVGAVVKARDKYRHPECFVCADCNLNLKQKGYFFVEGELYCETHARARMRPPEGYDTVTLYPKA.

Residues 1-84 (MPQNVILPGP…QLCLKIDRAE (84 aa)) form the PDZ domain. S18 is subject to Phosphoserine. Residues 126-156 (FIIPGRSSGCSTPSGIDGGSGRSTPSSVSTL) are disordered. Residues 147-156 (RSTPSSVSTL) are compositionally biased toward polar residues. The 60-residue stretch at 293 to 352 (PLCDKCGSGIVGAVVKARDKYRHPECFVCADCNLNLKQKGYFFVEGELYCETHARARMRP) folds into the LIM zinc-binding domain.

As to quaternary structure, interacts with ACTN2. Forms a heterodimer with PDLIM4 (via LIM domain).

The protein resides in the cytoplasm. The protein localises to the myofibril. It is found in the sarcomere. It localises to the z line. In terms of biological role, may play a role in the organization of actin filament arrays within muscle cells. The chain is PDZ and LIM domain protein 3 (PDLIM3) from Sus scrofa (Pig).